The sequence spans 391 residues: Phosphoglycerate kinase (391 aa).

Residues 21 to 23, Arg36, 59 to 62, Arg113, and Arg146 each bind substrate; these read DLN and HLGR. ATP contacts are provided by residues Lys197, Glu319, and 345-348; that span reads GGDT.

This sequence belongs to the phosphoglycerate kinase family. As to quaternary structure, monomer.

It localises to the cytoplasm. It carries out the reaction (2R)-3-phosphoglycerate + ATP = (2R)-3-phospho-glyceroyl phosphate + ADP. It participates in carbohydrate degradation; glycolysis; pyruvate from D-glyceraldehyde 3-phosphate: step 2/5. This is Phosphoglycerate kinase from Shewanella baltica (strain OS223).